Reading from the N-terminus, the 109-residue chain is Large ribosomal subunit protein bL19 (109 aa).

It belongs to the bacterial ribosomal protein bL19 family.

Functionally, this protein is located at the 30S-50S ribosomal subunit interface and may play a role in the structure and function of the aminoacyl-tRNA binding site. This is Large ribosomal subunit protein bL19 from Rubrobacter xylanophilus (strain DSM 9941 / JCM 11954 / NBRC 16129 / PRD-1).